We begin with the raw amino-acid sequence, 360 residues long: Peptide chain release factor 1 (360 aa).

Residue glutamine 237 is modified to N5-methylglutamine.

The protein belongs to the prokaryotic/mitochondrial release factor family. Methylated by PrmC. Methylation increases the termination efficiency of RF1.

It localises to the cytoplasm. In terms of biological role, peptide chain release factor 1 directs the termination of translation in response to the peptide chain termination codons UAG and UAA. The chain is Peptide chain release factor 1 from Pseudomonas fluorescens (strain ATCC BAA-477 / NRRL B-23932 / Pf-5).